A 310-amino-acid chain; its full sequence is Tagatose-6-phosphate kinase (310 aa).

Belongs to the carbohydrate kinase PfkB family. LacC subfamily.

The enzyme catalyses D-tagatofuranose 6-phosphate + ATP = D-tagatofuranose 1,6-bisphosphate + ADP + H(+). Its pathway is carbohydrate metabolism; D-tagatose 6-phosphate degradation; D-glyceraldehyde 3-phosphate and glycerone phosphate from D-tagatose 6-phosphate: step 1/2. The polypeptide is Tagatose-6-phosphate kinase (Staphylococcus aureus (strain Mu3 / ATCC 700698)).